We begin with the raw amino-acid sequence, 289 residues long: 4-diphosphocytidyl-2-C-methyl-D-erythritol kinase (289 aa).

Residue Lys10 is part of the active site. 95-105 (PVSAGMGGGSA) is a binding site for ATP. Asp137 is an active-site residue.

The protein belongs to the GHMP kinase family. IspE subfamily.

The enzyme catalyses 4-CDP-2-C-methyl-D-erythritol + ATP = 4-CDP-2-C-methyl-D-erythritol 2-phosphate + ADP + H(+). The protein operates within isoprenoid biosynthesis; isopentenyl diphosphate biosynthesis via DXP pathway; isopentenyl diphosphate from 1-deoxy-D-xylulose 5-phosphate: step 3/6. In terms of biological role, catalyzes the phosphorylation of the position 2 hydroxy group of 4-diphosphocytidyl-2C-methyl-D-erythritol. This chain is 4-diphosphocytidyl-2-C-methyl-D-erythritol kinase, found in Ligilactobacillus salivarius (strain UCC118) (Lactobacillus salivarius).